Consider the following 265-residue polypeptide: Phosphate import ATP-binding protein PstB (265 aa).

An ABC transporter domain is found at 18-260; that stretch reads IAAKGVNVYY…PEDPRTESYI (243 aa). 50–57 contacts ATP; it reads GPSGCGKS.

Belongs to the ABC transporter superfamily. Phosphate importer (TC 3.A.1.7) family. In terms of assembly, the complex is composed of two ATP-binding proteins (PstB), two transmembrane proteins (PstC and PstA) and a solute-binding protein (PstS).

It localises to the cell inner membrane. The catalysed reaction is phosphate(out) + ATP + H2O = ADP + 2 phosphate(in) + H(+). Functionally, part of the ABC transporter complex PstSACB involved in phosphate import. Responsible for energy coupling to the transport system. The polypeptide is Phosphate import ATP-binding protein PstB (Ruegeria sp. (strain TM1040) (Silicibacter sp.)).